Consider the following 1196-residue polypeptide: Contactin rig-6 (1196 aa).

Positions 1–19 (MMMLIRCISIFLLFGFVNA) are cleaved as a signal peptide. N-linked (GlcNAc...) asparagine glycosylation is found at asparagine 100 and asparagine 195. 2 Ig-like C2-type domains span residues 144-225 (PQIS…ARNS) and 232-319 (PPIL…CSLS). 2 disulfide bridges follow: cysteine 169-cysteine 220 and cysteine 263-cysteine 316. The N-linked (GlcNAc...) asparagine glycan is linked to asparagine 343. Ig-like C2-type domains lie at 355–438 (PQIF…VKLR), 441–533 (PSIL…ALLT), 539–626 (PVFP…VQLI), and 631–730 (PSIK…EFVT). Cysteine 372 and cysteine 420 are disulfide-bonded. N-linked (GlcNAc...) asparagine glycosylation is present at asparagine 457. Intrachain disulfides connect cysteine 462–cysteine 517 and cysteine 562–cysteine 610. N-linked (GlcNAc...) asparagine glycosylation is present at asparagine 644. An intrachain disulfide couples cysteine 653 to cysteine 718. 4 Fibronectin type-III domains span residues 736–844 (SPIA…TAPG), 849–961 (TIDN…SHGE), 963–1057 (KKVS…TKQH), and 1064–1168 (LIGK…LGSP). N-linked (GlcNAc...) asparagine glycosylation is found at asparagine 895, asparagine 925, asparagine 945, asparagine 974, asparagine 979, asparagine 986, asparagine 1002, and asparagine 1092. A helical transmembrane segment spans residues 1174–1194 (TTGSSDVPIPSLLLLLLLLLW). Serine 1177 carries GPI-anchor amidated serine lipidation. A propeptide spans 1178–1196 (SDVPIPSLLLLLLLLLWRL) (removed in mature form).

It belongs to the immunoglobulin superfamily. Contactin family. As to quaternary structure, interacts with sax-7; the interaction establishes synaptic connections between neurons. In terms of tissue distribution, expressed in neurons including the I1 and I3 pharyngeal interneurons, NSM and VNC motor neurons, HSN and CAN neurons, the ALM and PLM touch receptor neurons and other unidentified head neurons. Expressed in AVG interneurons. Also expressed in somatic muscles, the excretory canal, the excretory cell and the hypodermis.

Its subcellular location is the cell membrane. It is found in the perikaryon. The protein resides in the cell projection. It localises to the axon. The protein localises to the synapse. Its subcellular location is the cytoplasm. Functionally, probable cell adhesion protein involved in patterning of the nervous system, playing a role in ALM and PLM touch receptor axon growth and VNC axon navigation. By associating with the transmembrane protein sax-7, mediates axonal interactions to establish synaptic connections between the AVG interneuron and the two PHC sensory neurons. Also required for non-neuronal cell migration in the excretory canal, regulating excretory canal elongation and excretory cell morphogenesis. Plays a role in regulating male mating behavior. This is Contactin rig-6 from Caenorhabditis elegans.